A 101-amino-acid chain; its full sequence is MAKLSLINRDIKRAKLADKYAAKRAELKAIIDDQSKTDEERYQARLKLQQLPRNANPTRQRNRCVVTGRPRGVFRKFGLTRHKLREMAMKGEIPGITKASW.

Belongs to the universal ribosomal protein uS14 family. Part of the 30S ribosomal subunit. Contacts proteins S3 and S10.

Functionally, binds 16S rRNA, required for the assembly of 30S particles and may also be responsible for determining the conformation of the 16S rRNA at the A site. This is Small ribosomal subunit protein uS14 from Bordetella petrii (strain ATCC BAA-461 / DSM 12804 / CCUG 43448).